The primary structure comprises 102 residues: NADH-quinone oxidoreductase subunit K (102 aa).

Helical transmembrane passes span 5–25, 31–51, and 65–85; these read LSHY…GIFL, IVIL…MVAF, and LFIL…LVVF.

Belongs to the complex I subunit 4L family. NDH-1 is composed of 14 different subunits. Subunits NuoA, H, J, K, L, M, N constitute the membrane sector of the complex.

The protein resides in the cell inner membrane. It catalyses the reaction a quinone + NADH + 5 H(+)(in) = a quinol + NAD(+) + 4 H(+)(out). Functionally, NDH-1 shuttles electrons from NADH, via FMN and iron-sulfur (Fe-S) centers, to quinones in the respiratory chain. The immediate electron acceptor for the enzyme in this species is believed to be ubiquinone. Couples the redox reaction to proton translocation (for every two electrons transferred, four hydrogen ions are translocated across the cytoplasmic membrane), and thus conserves the redox energy in a proton gradient. The protein is NADH-quinone oxidoreductase subunit K of Rhizobium johnstonii (strain DSM 114642 / LMG 32736 / 3841) (Rhizobium leguminosarum bv. viciae).